We begin with the raw amino-acid sequence, 650 residues long: MSQYIAELCTLLVEDNFGELFGHIFATLIRYDRLTLPRLRLYSKLPDAQLRRGLAAMVQQHLVYHYTSYEEGVTYYEPNLQSAYYLIRAGKILEFIEERLGKYAATVMSTIMFLGHAQVSYLETLPELQPQAPTAVNGNHEQPEKEIEGEGVEGEGIEEEGHTNGVNGEEALEEQEEQAQPFLLHPTLKALAAHGYIHRVREAHFQSYADNVLDCERTIKARADIKQMKGKKLEETVLELTAEMLRERLDGDLTHGLVFNGVPRGAKRRRGPGGAERSNKKARVDYVAVDEDEEEEEENEWSEDEMGGDNIPMESGITVRVNYEKLDVALRNRRFLELAEQDCSAATIHVYECLLRRIEYKTKQCRDTPEIPREGEEGKQFAAPISLAAIAEDVDPSVDLAGSIGPMDPSQAVNRRGKRPLDDGVNGTHHDGPNGASSDGNRIYDVGQHLALLSEPPHNLTEKKVVANLPSWTVEFRSLACKLRHLELERMIEARYGDVALRVVRVLHAKGKLDEKRLQEISLLPFRVLRQVLASMQAGGFVDLQEVPRDAQRQPSRTIYLWFYDPDRTRASILEDTYKSMSRCLQRLRFERNRLKEFLEKTERSDVKGNEERYLSEAELTLLEQWRAKEALLLGEVARLDEMVAVMRDY.

Disordered stretches follow at residues 133–163 (PTAV…EGHT), 264–283 (RGAK…KKAR), 288–313 (AVDE…NIPM), and 400–440 (LAGS…SSDG). Residues 149 to 158 (GEGVEGEGIE) show a composition bias toward acidic residues. Positions 288 to 307 (AVDEDEEEEEENEWSEDEMG) are enriched in acidic residues. Residues 577-598 (TYKSMSRCLQRLRFERNRLKEF) are leucine-zipper.

Belongs to the RNA polymerase beta chain family. Component of the RNA polymerase III (Pol III) complex consisting of 17 subunits.

It is found in the nucleus. Functionally, DNA-dependent RNA polymerase catalyzes the transcription of DNA into RNA using the four ribonucleoside triphosphates as substrates. Specific core component of RNA polymerase III which synthesizes small RNAs, such as 5S rRNA and tRNAs. This is DNA-directed RNA polymerase III subunit rpc3 (rpc82) from Aspergillus terreus (strain NIH 2624 / FGSC A1156).